A 317-amino-acid polypeptide reads, in one-letter code: Pyridoxal 5'-phosphate synthase subunit PdxS (317 aa).

Residue aspartate 47 coordinates D-ribose 5-phosphate. Lysine 104 (schiff-base intermediate with D-ribose 5-phosphate) is an active-site residue. Glycine 176 serves as a coordination point for D-ribose 5-phosphate. Position 188 (arginine 188) interacts with D-glyceraldehyde 3-phosphate. D-ribose 5-phosphate contacts are provided by residues glycine 237 and 258-259 (GS).

Belongs to the PdxS/SNZ family. In terms of assembly, in the presence of PdxT, forms a dodecamer of heterodimers.

The catalysed reaction is aldehydo-D-ribose 5-phosphate + D-glyceraldehyde 3-phosphate + L-glutamine = pyridoxal 5'-phosphate + L-glutamate + phosphate + 3 H2O + H(+). It functions in the pathway cofactor biosynthesis; pyridoxal 5'-phosphate biosynthesis. In terms of biological role, catalyzes the formation of pyridoxal 5'-phosphate from ribose 5-phosphate (RBP), glyceraldehyde 3-phosphate (G3P) and ammonia. The ammonia is provided by the PdxT subunit. Can also use ribulose 5-phosphate and dihydroxyacetone phosphate as substrates, resulting from enzyme-catalyzed isomerization of RBP and G3P, respectively. The protein is Pyridoxal 5'-phosphate synthase subunit PdxS of Corynebacterium glutamicum (strain ATCC 13032 / DSM 20300 / JCM 1318 / BCRC 11384 / CCUG 27702 / LMG 3730 / NBRC 12168 / NCIMB 10025 / NRRL B-2784 / 534).